A 264-amino-acid chain; its full sequence is MAVYEERIPQVKQQRPRRRGNRKLVFLLVLFFLTILIIVFIRSPYSKVQEIRVTGNDIYTTEQVITESGLMKDMQFLNVWENSVRNNLKPLEAIKDVTVSRSFPGLITLHITEQKRVAFWSGQDGSRYALLDNGYVLKQVNFAKRVVDRPLISSWASPELLPHLAKSLSKLSPNVLAEISDITLTPTVYDKQRITLYMRDGNEVRSVIYKLDKMMNWYPAIMKQLPPDTKGVLSLFEQPWFIPYGAQGAIPIQEGQEQPQQPQQ.

At 1 to 23 (MAVYEERIPQVKQQRPRRRGNRK) the chain is on the cytoplasmic side. The helical transmembrane segment at 24 to 44 (LVFLLVLFFLTILIIVFIRSP) threads the bilayer. The Extracellular segment spans residues 45–264 (YSKVQEIRVT…GQEQPQQPQQ (220 aa)). Residues 46–114 (SKVQEIRVTG…GLITLHITEQ (69 aa)) enclose the POTRA domain.

The protein belongs to the FtsQ/DivIB family. DivIB subfamily.

The protein resides in the cell membrane. In terms of biological role, cell division protein that may be involved in stabilizing or promoting the assembly of the division complex. This is Cell division protein DivIB from Brevibacillus brevis (strain 47 / JCM 6285 / NBRC 100599).